We begin with the raw amino-acid sequence, 521 residues long: Forkhead box protein N4 (521 aa).

A DNA-binding region (fork-head) is located at residues 197–293 (KPIYSYSCLI…EEMHKWKRKD (97 aa)). The segment at 371 to 406 (PQAHLAPDSPAPAQTPPLHALPSLSPGPLPQPAMGR) is disordered.

In terms of tissue distribution, mainly expressed in proliferator progenitor cells in brain and retina rather than differentiated cells. In contrast, is expressed only in postmitotic epithelial cells rather than in proliferative progenitors in the proximal airway.

The protein resides in the nucleus. Transcription factor essential for neural and some non-neural tissues development, such as retina and lung respectively. Binds to an 11-bp consensus sequence containing the invariant tetranucleotide 5'-ACGC-3'. During development of the central nervous system, is required to specify the amacrine and horizontal cell fates from multipotent retinal progenitors while suppressing the alternative photoreceptor cell fates through activating DLL4-NOTCH signaling. Also acts synergistically with ASCL1/MASH1 to activate DLL4-NOTCH signaling and drive commitment of p2 progenitors to the V2b interneuron fates during spinal cord neurogenesis. In development of non-neural tissues, plays an essential role in the specification of the atrioventricular canal and is indirectly required for patterning the distal airway during lung development. This chain is Forkhead box protein N4 (Foxn4), found in Mus musculus (Mouse).